The sequence spans 259 residues: Transmembrane protein 81 (259 aa).

An N-terminal signal peptide occupies residues 1-18; the sequence is MALSTLWLVLMLWTSLFS. Residues 19 to 221 are Extracellular-facing; the sequence is DSQCSTLSQA…KVYSSSTIRN (203 aa). The Ig-like domain maps to 97–172; sequence GRRLVLDCLE…VLDTGKRRVK (76 aa). A disulfide bridge connects residues Cys104 and Cys161. A helical membrane pass occupies residues 222–242; that stretch reads IVIISVPLSFAIAVVIFIFLF. Residues 243–259 are Cytoplasmic-facing; it reads CYSRRARRAAHLCQDNI.

As to quaternary structure, forms a complex with izumo1 and spaca6 on spermatocyte cell membrane. The complex binds to oocyte protein bncr. As to expression, expressed in sperm.

It localises to the cell membrane. In terms of biological role, essential fertilization factor required for male fertility. Part of a conserved trimeric sperm complex with the essential fertilization factors IZUMO1 and SPACA6 which bridges sperm and oocyte membranes during fertilization by binding to IZUMO1R/JUNO on the oocyte. The protein is Transmembrane protein 81 of Danio rerio (Zebrafish).